Consider the following 424-residue polypeptide: Putative histone deacetylase complex subunit cti6 (424 aa).

4 disordered regions span residues M1–T49, S117–S155, K170–T341, and A381–R405. A PHD-type zinc finger spans residues V48–E103. Over residues E127–T137 the composition is skewed to low complexity. Residue S187 is modified to Phosphoserine. Residues D241–D256 are compositionally biased toward acidic residues. The segment covering E257–S266 has biased composition (basic and acidic residues). The segment covering Q272–R287 has biased composition (low complexity). Over residues R294–D303 the composition is skewed to basic and acidic residues. Basic residues predominate over residues S313–K324. Basic and acidic residues predominate over residues S392–R405.

It is found in the cytoplasm. It localises to the nucleus. Functionally, could be a component of the RPD3C(L) histone deacetylase complex (HDAC). This chain is Putative histone deacetylase complex subunit cti6 (cti6), found in Schizosaccharomyces pombe (strain 972 / ATCC 24843) (Fission yeast).